The sequence spans 189 residues: MNDEYSQKAKREGYLARSVYKLIEINEKFSLFSYGNVLDIGASPGSFSQYAYKKLKRGILVAVDINDIGLRHVDNFYFVKGDIFSDDTVFKINTLGPYSLVISDAAPRTTGNRLVDTSNSFNLSMRIIDLSLEVLIKKGNLLVKVFQGGDEIQIFKKFEKYFKFVKKIRPKAVRKNSFEIYFLGKSFGK.

Positions 45, 47, 64, 82, and 104 each coordinate S-adenosyl-L-methionine. The active-site Proton acceptor is the Lys144.

This sequence belongs to the class I-like SAM-binding methyltransferase superfamily. RNA methyltransferase RlmE family.

The protein localises to the cytoplasm. The catalysed reaction is uridine(2552) in 23S rRNA + S-adenosyl-L-methionine = 2'-O-methyluridine(2552) in 23S rRNA + S-adenosyl-L-homocysteine + H(+). Its function is as follows. Specifically methylates the uridine in position 2552 of 23S rRNA at the 2'-O position of the ribose in the fully assembled 50S ribosomal subunit. This is Ribosomal RNA large subunit methyltransferase E from Borreliella afzelii (strain PKo) (Borrelia afzelii).